Reading from the N-terminus, the 148-residue chain is Cytochrome c-type biogenesis protein CcmE (148 aa).

Topologically, residues 1–7 (MTRKQRR) are cytoplasmic. A helical; Signal-anchor for type II membrane protein transmembrane segment spans residues 8-28 (LYFVLLGMAALGGAVALVLTA). At 29 to 148 (ISDSLVYFYS…QWNDGKQPKQ (120 aa)) the chain is on the periplasmic side. Residues histidine 121 and tyrosine 125 each contribute to the heme site.

Belongs to the CcmE/CycJ family.

It localises to the cell inner membrane. Its function is as follows. Heme chaperone required for the biogenesis of c-type cytochromes. Transiently binds heme delivered by CcmC and transfers the heme to apo-cytochromes in a process facilitated by CcmF and CcmH. The polypeptide is Cytochrome c-type biogenesis protein CcmE (Paramagnetospirillum magneticum (strain ATCC 700264 / AMB-1) (Magnetospirillum magneticum)).